The primary structure comprises 377 residues: Signal peptide peptidase (377 aa).

Positions 1–27 (MDSALSDPHNGSAEAGGPTNSTTRPPS) are disordered. Topologically, residues 1–31 (MDSALSDPHNGSAEAGGPTNSTTRPPSTPEG) are lumenal. Residues Asn-10 and Asn-20 are each glycosylated (N-linked (GlcNAc...) asparagine). Residues 32-52 (IALAYGSLLLMALLPIFFGAL) traverse the membrane as a helical segment. At 53 to 77 (RSVRCARGKNASDMPETITSRDAAR) the chain is on the cytoplasmic side. A helical membrane pass occupies residues 78–98 (FPIIASCTLLGLYLFFKIFSQ). At 99–100 (EY) the chain is on the lumenal side. A helical transmembrane segment spans residues 101-121 (INLLLSMYFFVLGILALSHTI). The Cytoplasmic segment spans residues 122 to 157 (SPFMNKFFPASFPNRQYQLLFTQGSGENKEEIINYE). Residues 158–178 (FDTKDLVCLGLSSIVGVWYLL) traverse the membrane as a helical segment. Topologically, residues 179–181 (RKH) are lumenal. The helical transmembrane segment at 182–202 (WIANNLFGLAFSLNGVELLHL) threads the bilayer. At 203–209 (NNVSTGC) the chain is on the cytoplasmic side. A helical transmembrane segment spans residues 210–230 (ILLGGLFIYDVFWVFGTNVMV). The active site involves Asp-219. Over 231–256 (TVAKSFEAPIKLVFPQDLLEKGLEAN) the chain is Lumenal. A helical transmembrane segment spans residues 257-277 (NFAMLGLGDVVIPGIFIALLL). Asp-265 is a catalytic residue. At 278–290 (RFDISLKKNTHTY) the chain is on the cytoplasmic side. The chain crosses the membrane as a helical span at residues 291-311 (FYTSFAAYIFGLGLTIFIMHI). The Lumenal segment spans residues 312–314 (FKH). Residues 315 to 335 (AQPALLYLVPACIGFPVLVAL) form a helical membrane-spanning segment. The PAL motif lies at 317–319 (PAL). The Cytoplasmic segment spans residues 336–377 (AKGEVTEMFSYEESNPKDPAAVTESKEGTEASASKGLEKKEK). A disordered region spans residues 345-377 (SYEESNPKDPAAVTESKEGTEASASKGLEKKEK). Ser-367 is subject to Phosphoserine.

This sequence belongs to the peptidase A22B family. Monomer. Homodimer. Interacts with RNF139. Interacts with DERL1 and XBP1 isoform 1. In terms of processing, N-glycosylated. Widely expressed with highest levels in kidney, liver, placenta, lung, leukocytes and small intestine and reduced expression in heart and skeletal muscle. Expressed abundantly in the CNS with highest levels in thalamus and medulla.

The protein resides in the endoplasmic reticulum membrane. It is found in the membrane. Its subcellular location is the cell membrane. Functionally, catalyzes intramembrane proteolysis of signal peptides that have been removed from precursors of secretory and membrane proteins, resulting in the release of the fragment from the ER membrane into the cytoplasm. Required to generate lymphocyte cell surface (HLA-E) epitopes derived from MHC class I signal peptides. May be necessary for the removal of the signal peptide that remains attached to the hepatitis C virus core protein after the initial proteolytic processing of the polyprotein. Involved in the intramembrane cleavage of the integral membrane protein PSEN1. Cleaves the integral membrane protein XBP1 isoform 1 in a DERL1/RNF139-dependent manner. May play a role in graft rejection. This chain is Signal peptide peptidase, found in Homo sapiens (Human).